Consider the following 347-residue polypeptide: 3-methyl-2-oxobutanoate hydroxymethyltransferase 1, mitochondrial (347 aa).

A mitochondrion-targeting transit peptide spans 1-48 (MASSLTRNCSRFSKAISVRFMSNLPENTVYGGPKPQNPNQRVTLTHLR). Mg(2+) is bound by residues aspartate 83 and aspartate 122. 3-methyl-2-oxobutanoate contacts are provided by residues 83–84 (DS), aspartate 122, and lysine 152. Glutamate 154 lines the Mg(2+) pocket. Catalysis depends on glutamate 222, which acts as the Proton acceptor.

This sequence belongs to the PanB family. Mg(2+) serves as cofactor.

Its subcellular location is the mitochondrion. The catalysed reaction is 3-methyl-2-oxobutanoate + (6R)-5,10-methylene-5,6,7,8-tetrahydrofolate + H2O = 2-dehydropantoate + (6S)-5,6,7,8-tetrahydrofolate. It participates in cofactor biosynthesis; (R)-pantothenate biosynthesis; (R)-pantoate from 3-methyl-2-oxobutanoate: step 1/2. In terms of biological role, catalyzes the reversible reaction in which hydroxymethyl group from 5,10-methylenetetrahydrofolate is transferred onto alpha-ketoisovalerate to form ketopantoate. This is 3-methyl-2-oxobutanoate hydroxymethyltransferase 1, mitochondrial (KPHMT1) from Arabidopsis thaliana (Mouse-ear cress).